Reading from the N-terminus, the 152-residue chain is Ubiquitin-conjugating enzyme E2 N (152 aa).

The UBC core domain occupies 3-149 (GLPRRIIKET…ARAWTRLYAM (147 aa)). Lys-82 bears the N6-acetyllysine mark. The Glycyl thioester intermediate role is filled by Cys-87. A Glycyl lysine isopeptide (Lys-Gly) (interchain with G-Cter in ISG15) cross-link involves residue Lys-92.

It belongs to the ubiquitin-conjugating enzyme family. In terms of assembly, heterodimer with UBE2V2. Interacts (UBE2V2-UBE2N heterodimer) with the E3 ligase STUB1 (via the U-box domain); the complex has a specific 'Lys-63'-linked polyubiquitination activity. Interacts with RNF8 and RNF168. Interacts with RNF11. Interacts with the E3 ligases, HLTF and SHPRH; the interactions promote the 'Lys-63'-linked polyubiquitination of PCNA upon genotoxic stress and lead to DNA repair. Interacts with ARIH2 (via RING-type 2). Interacts with OTUB1; leading to inhibit E2-conjugating activity. Interacts with RIGI and RNF135; involved in RIGI ubiquitination and activation. In terms of processing, conjugation to ISG15 impairs formation of the thioester bond with ubiquitin but not interaction with UBE2V2.

It carries out the reaction S-ubiquitinyl-[E1 ubiquitin-activating enzyme]-L-cysteine + [E2 ubiquitin-conjugating enzyme]-L-cysteine = [E1 ubiquitin-activating enzyme]-L-cysteine + S-ubiquitinyl-[E2 ubiquitin-conjugating enzyme]-L-cysteine.. Its pathway is protein modification; protein ubiquitination. Its activity is regulated as follows. Activity is inhibited by binding to OTUB1, which prevents 'Lys-63'-linked polyubiquitination. The UBE2V1-UBE2N and UBE2V2-UBE2N heterodimers catalyze the synthesis of non-canonical 'Lys-63'-linked polyubiquitin chains. This type of polyubiquitination does not lead to protein degradation by the proteasome. Mediates transcriptional activation of target genes. Plays a role in the control of progress through the cell cycle and differentiation. Plays a role in the error-free DNA repair pathway and contributes to the survival of cells after DNA damage. Acts together with the E3 ligases, HLTF and SHPRH, in the 'Lys-63'-linked poly-ubiquitination of PCNA upon genotoxic stress, which is required for DNA repair. Appears to act together with E3 ligase RNF5 in the 'Lys-63'-linked polyubiquitination of JKAMP thereby regulating JKAMP function by decreasing its association with components of the proteasome and ERAD. Promotes TRIM5 capsid-specific restriction activity and the UBE2V1-UBE2N heterodimer acts in concert with TRIM5 to generate 'Lys-63'-linked polyubiquitin chains which activate the MAP3K7/TAK1 complex which in turn results in the induction and expression of NF-kappa-B and MAPK-responsive inflammatory genes. Together with RNF135 and UB2V1, catalyzes the viral RNA-dependent 'Lys-63'-linked polyubiquitination of RIGI to activate the downstream signaling pathway that leads to interferon beta production. UBE2V1-UBE2N together with TRAF3IP2 E3 ubiquitin ligase mediate 'Lys-63'-linked polyubiquitination of TRAF6, a component of IL17A-mediated signaling pathway. This Macaca fascicularis (Crab-eating macaque) protein is Ubiquitin-conjugating enzyme E2 N (UBE2N).